The primary structure comprises 325 residues: MSLKSLLKGFKRPKKIEFNTEASTPNYGKFVAEPFERGFATTIGNSLRRTLMSSIEGAAISAIRIEGVNHEFSFIEGVAEDVTRIILNLKQVRIKYEPEEKDQSKIIHLELKGAGYFRAGDLAVDSSIEIMNPDLHIATLNEDANLVMDLEIQRGRGYVPAEEKKKDIEVLGTIPVDSIFSPVQKVVFEVSETRVAQRSDYEKLTLEVWTDGSVSPDDAVAQAAKILKEHLTVFINFEEELEEEDDELDEADEKLKASLSKHVEELELSVRSLNVLRSLEIDFIGDLVKRSEEEMSKSKHYSDQCLQELKGKLSTLGLSFGMRDF.

The interval 1–238 (MSLKSLLKGF…EHLTVFINFE (238 aa)) is alpha N-terminal domain (alpha-NTD). An alpha C-terminal domain (alpha-CTD) region spans residues 254-325 (KLKASLSKHV…LGLSFGMRDF (72 aa)).

It belongs to the RNA polymerase alpha chain family. As to quaternary structure, homodimer. The RNAP catalytic core consists of 2 alpha, 1 beta, 1 beta' and 1 omega subunit. When a sigma factor is associated with the core the holoenzyme is formed, which can initiate transcription.

It catalyses the reaction RNA(n) + a ribonucleoside 5'-triphosphate = RNA(n+1) + diphosphate. Functionally, DNA-dependent RNA polymerase catalyzes the transcription of DNA into RNA using the four ribonucleoside triphosphates as substrates. This Leptospira borgpetersenii serovar Hardjo-bovis (strain JB197) protein is DNA-directed RNA polymerase subunit alpha.